The chain runs to 196 residues: O-methyltransferase dpmpI (196 aa).

Residues 127 to 128, D152, and 174 to 175 contribute to the S-adenosyl-L-methionine site; these read GG and SF. Residues 166–196 form a disordered region; that stretch reads NGIEAVPHSFEDPQPIKSKSPRLDNLARERL. A compositionally biased stretch (basic and acidic residues) spans 186-196; that stretch reads PRLDNLARERL.

The protein belongs to the class I-like SAM-binding methyltransferase superfamily. Cation-independent O-methyltransferase family.

It functions in the pathway secondary metabolite biosynthesis; terpenoid biosynthesis. Functionally, O-methyltransferase; part of the gene cluster that mediates the biosynthesis of diterpenoid pyrones. The first step of the pathway is the synthesis of the alpha-pyrone moiety by the polyketide synthase dpmpA via condensation of one acetyl-CoA starter unit with 3 malonyl-CoA units and 2 methylations. The alpha-pyrone is then combined with geranylgeranyl pyrophosphate (GGPP) formed by the GGPP synthase dpmpD through the action of the prenyltransferase dpmpC to yield a linear alpha-pyrone diterpenoid. Subsequent steps in the diterpenoid pyrone biosynthetic pathway involve the decalin core formation, which is initiated by the epoxidation of the C10-C11 olefin by the FAD-dependent oxidoreductase dpmpE, and is followed by a cyclization cascade catalyzed by the terpene cyclase dpmpB. The short chain dehydrogenase/reductase dpmpG then oxidizes the 8S hydroxy group to a ketone and the short chain dehydrogenase/reductase dpmpH reduces the ketone to the 8R hydroxy group to yield higginsianin B. Higginsianin B is further methylated by the methyltransferase dpmpI to produce the intermediate named FDDP B. The cytochrome P450 monooxygenase dpmpJ then oxidizes the C-26 methyl to primary alcohol, producing the final diterpenoid pyrone with a C-26 primary alcohol on the gamma-pyrone moiety named FDDP C. This is O-methyltransferase dpmpI from Macrophomina phaseolina (strain MS6) (Charcoal rot fungus).